Here is a 400-residue protein sequence, read N- to C-terminus: Dehydrogenase efuE (400 aa).

Residues Ala-222–Ile-223, Thr-303–Arg-305, and Asp-329 each bind NAD(+). The active site involves Arg-305. Glu-334 is a catalytic residue. The active-site Proton donor is His-352. His-352–Gly-355 serves as a coordination point for NAD(+).

It belongs to the D-isomer specific 2-hydroxyacid dehydrogenase family.

It functions in the pathway secondary metabolite biosynthesis; terpenoid biosynthesis. Its function is as follows. Dehydrogenase; part of the gene cluster that mediates the biosynthesis of enfumafungin, a glycosylated fernene-type triterpenoid with potent antifungal activity, mediated by its interaction with beta-1,3-glucan synthase and the fungal cell wall. The pathway begins with the terpene cyclase-glycosyl transferase fusion protein that most likely uses 2,3-oxidosqualene as substrate and catalyzes glycosylation immediately after cyclization. The fernene glycoside then could be processed by the desaturase efuI which catalyzes isomerization of a double bond established by efuA to form the core structure. The latter would then undergo a series of hydroxylations in unknown order at C-2, C-19, C-23 and C-25, which would be catalyzed by two of the three cytochrome P450 monooxygenases efuB, efuG or efuH. The hydroxy-group at C-25 becomes oxidized by the dehydrogenase efuE to enable a spontaneous, non-enzymatic hemiacetal formation with C-23. After hydroxylation at C-2, acetylation by the acetyltransferase efuC takes place. The final steps in enfumafungin biosynthesis require expansion of the 5-membered ring by lactonization via a Baeyer-Villiger reaction mediated by one of the BGC's cytochrome P450 monooxygenases (efuB, efuG or efuH) followed by ring cleavage. This type of reaction would establish a double bond between C-20 and C-21 which could be reduced by the reductase efuL to form the final product. The protein is Dehydrogenase efuE of Hormonema carpetanum.